A 381-amino-acid polypeptide reads, in one-letter code: S-adenosylmethionine synthase (381 aa).

His15 is a binding site for ATP. Asp17 serves as a coordination point for Mg(2+). Glu43 provides a ligand contact to K(+). Glu56 and Gln99 together coordinate L-methionine. A flexible loop region spans residues 99–109 (QSLDIAQGVDN). ATP is bound by residues 164-166 (DGK), 230-231 (RF), Asp239, 245-246 (RK), and Lys266. An L-methionine-binding site is contributed by Asp239. Lys270 contributes to the L-methionine binding site.

It belongs to the AdoMet synthase family. Homotetramer; dimer of dimers. Requires Mg(2+) as cofactor. K(+) is required as a cofactor.

It is found in the cytoplasm. It catalyses the reaction L-methionine + ATP + H2O = S-adenosyl-L-methionine + phosphate + diphosphate. It participates in amino-acid biosynthesis; S-adenosyl-L-methionine biosynthesis; S-adenosyl-L-methionine from L-methionine: step 1/1. Its function is as follows. Catalyzes the formation of S-adenosylmethionine (AdoMet) from methionine and ATP. The overall synthetic reaction is composed of two sequential steps, AdoMet formation and the subsequent tripolyphosphate hydrolysis which occurs prior to release of AdoMet from the enzyme. The protein is S-adenosylmethionine synthase of Legionella jeonii.